A 427-amino-acid chain; its full sequence is Enolase (427 aa).

(2R)-2-phosphoglycerate is bound at residue glutamine 163. The Proton donor role is filled by glutamate 205. Aspartate 242, glutamate 285, and aspartate 312 together coordinate Mg(2+). (2R)-2-phosphoglycerate contacts are provided by lysine 337, arginine 366, serine 367, and lysine 388. Lysine 337 acts as the Proton acceptor in catalysis.

The protein belongs to the enolase family. Requires Mg(2+) as cofactor.

The protein localises to the cytoplasm. It localises to the secreted. The protein resides in the cell surface. The catalysed reaction is (2R)-2-phosphoglycerate = phosphoenolpyruvate + H2O. The protein operates within carbohydrate degradation; glycolysis; pyruvate from D-glyceraldehyde 3-phosphate: step 4/5. Functionally, catalyzes the reversible conversion of 2-phosphoglycerate (2-PG) into phosphoenolpyruvate (PEP). It is essential for the degradation of carbohydrates via glycolysis. The chain is Enolase from Burkholderia orbicola (strain MC0-3).